The primary structure comprises 163 residues: Neurotrophin-3 (163 aa).

Positions 1–3 (IQS) are cleaved as a signal peptide. Residues 4 to 119 (TSMDQGILTE…VLNRTSRRKR (116 aa)) constitute a propeptide that is removed on maturation. Residue N112 is glycosylated (N-linked (GlcNAc...) asparagine). The interval 113–133 (RTSRRKREGKSHRGEYSVCDS) is disordered. Residues 123–133 (SHRGEYSVCDS) are compositionally biased toward basic and acidic residues.

This sequence belongs to the NGF-beta family.

Its subcellular location is the secreted. Functionally, seems to promote the survival of visceral and proprioceptive sensory neurons. This Charina bottae (Northern rubber boa) protein is Neurotrophin-3 (NTF3).